Consider the following 172-residue polypeptide: Centrin-1 (172 aa).

The tract at residues 1 to 30 (MASSYRKPTVASTSQKRKVGPKPELTEEQK) is disordered. 4 consecutive EF-hand domains span residues 28 to 63 (EQKQ…LGFE), 64 to 99 (PRKE…KMAE), 101 to 136 (DTKE…LGEN), and 137 to 172 (LTDE…TNLY). 5 residues coordinate Ca(2+): aspartate 41, aspartate 43, serine 45, threonine 47, and glutamate 52. Ca(2+) contacts are provided by aspartate 150, aspartate 152, aspartate 154, glutamate 156, and glutamate 161.

The protein belongs to the centrin family. Monomer. Interacts with CIMAP3. Interacts with USP49.

The protein resides in the cytoplasm. It localises to the cytoskeleton. The protein localises to the microtubule organizing center. It is found in the centrosome. In terms of biological role, plays a fundamental role in microtubule-organizing center structure and function. Plays a role in sperm cilia formation. The polypeptide is Centrin-1 (CETN1) (Bos taurus (Bovine)).